We begin with the raw amino-acid sequence, 142 residues long: Large ribosomal subunit protein uL13 (142 aa).

It belongs to the universal ribosomal protein uL13 family. In terms of assembly, part of the 50S ribosomal subunit.

Functionally, this protein is one of the early assembly proteins of the 50S ribosomal subunit, although it is not seen to bind rRNA by itself. It is important during the early stages of 50S assembly. The protein is Large ribosomal subunit protein uL13 of Marinomonas sp. (strain MWYL1).